A 451-amino-acid chain; its full sequence is Trigger factor (451 aa).

Residues 163–248 enclose the PPIase FKBP-type domain; the sequence is GDIIDMEYTV…IKALYVNILP (86 aa).

Belongs to the FKBP-type PPIase family. Tig subfamily.

It is found in the cytoplasm. The enzyme catalyses [protein]-peptidylproline (omega=180) = [protein]-peptidylproline (omega=0). Its function is as follows. Involved in protein export. Acts as a chaperone by maintaining the newly synthesized protein in an open conformation. Functions as a peptidyl-prolyl cis-trans isomerase. The protein is Trigger factor of Leptospira borgpetersenii serovar Hardjo-bovis (strain JB197).